The sequence spans 160 residues: uncharacterized protein (160 aa).

4 helical membrane-spanning segments follow: residues 7-27, 48-68, 95-115, and 121-141; these read IFLKIALVLIGIPILALCIFL, LVFIYLYVTAIPFYFALYQAF, AVTISIFYAAGMPVFYLMAEI, and IIVIGLVIIFASMVIAVFAAV.

Its subcellular location is the cell membrane. This is an uncharacterized protein from Bacillus subtilis (strain 168).